The primary structure comprises 167 residues: Putative pre-16S rRNA nuclease (167 aa).

The protein belongs to the YqgF nuclease family.

It localises to the cytoplasm. In terms of biological role, could be a nuclease involved in processing of the 5'-end of pre-16S rRNA. The sequence is that of Putative pre-16S rRNA nuclease from Streptomyces coelicolor (strain ATCC BAA-471 / A3(2) / M145).